The sequence spans 395 residues: MWTLVVNCGSSSLKFALLNPATGETPLTGLAERLGSDLAAVRVDRGEERGTVPLPQGSYSEAFGVLLAELDALGLRQEVRAVGHRVVHGGDRFNAPVRITPEVLEVIRTCIPLAPLHNPANLAGIEAALAAFPELPQVAVFDTAFHQSMPPVAYRYAVPTVWYTCYGVRRYGFHGISHAYVAEEAARLLARDLTDLSLVTAHLGNGCSVTAVQGGRSLDTSMGLTPLEGLVMGTRSGDVDPGLPDYLAREAGLTLAEITAALNRESGLLGLSGLTNDMRELEAAAAGGNTNAQLALEIFVYRLAKTIAGMATVLGRLDALVFTGGIGENSATVRAATLARLGLLGFQLDAAANAQAVRGQGGVITSGGVPALVVNTNEERMIARETARAVKGAPA.

Mg(2+) is bound at residue Asn7. Lys14 contributes to the ATP binding site. Arg85 contacts substrate. Asp142 acts as the Proton donor/acceptor in catalysis. ATP is bound by residues 202 to 206, 277 to 279, and 325 to 329; these read HLGNG, DMR, and GIGEN. Residue Glu378 coordinates Mg(2+).

Belongs to the acetokinase family. Homodimer. Mg(2+) is required as a cofactor. It depends on Mn(2+) as a cofactor.

Its subcellular location is the cytoplasm. The catalysed reaction is acetate + ATP = acetyl phosphate + ADP. The protein operates within metabolic intermediate biosynthesis; acetyl-CoA biosynthesis; acetyl-CoA from acetate: step 1/2. Catalyzes the formation of acetyl phosphate from acetate and ATP. Can also catalyze the reverse reaction. The protein is Acetate kinase of Deinococcus geothermalis (strain DSM 11300 / CIP 105573 / AG-3a).